We begin with the raw amino-acid sequence, 381 residues long: ELMO domain-containing protein 3 (381 aa).

A disordered region spans residues 1-31; it reads MNEKSCSFHSKEELRDGQGERLSAGYSPSYD. The segment covering 9–19 has biased composition (basic and acidic residues); it reads HSKEELRDGQG. In terms of domain architecture, ELMO spans 170 to 324; it reads VHGRVLQTIY…ELEVLAKKSP (155 aa).

In terms of tissue distribution, both isoform 1 and isoform 6 are widely expressed.

Its subcellular location is the cell projection. The protein resides in the stereocilium. The protein localises to the kinocilium. It is found in the cytoplasm. It localises to the cytoskeleton. In terms of biological role, acts as a GTPase-activating protein (GAP) for ARL2 with low specific activity. This is ELMO domain-containing protein 3 (ELMOD3) from Homo sapiens (Human).